The following is a 230-amino-acid chain: Ubiquitin carboxyl-terminal hydrolase isozyme L3 (230 aa).

One can recognise a UCH catalytic domain in the interval 5–229; the sequence is RWLPLEANPE…LRFNAIALSA (225 aa). The tract at residues 8 to 13 is interaction with ubiquitin; that stretch reads PLEANP. Cys-95 (nucleophile) is an active-site residue. Ser-130 carries the post-translational modification Phosphoserine. An interaction with ubiquitin. Crossover loop which restricts access of large ubiquitin adducts to the active site region spans residues 152-159; that stretch reads AHEGQTEA. The active-site Proton donor is the His-169. Residues 219–224 are interaction with ubiquitin; it reads ELRFNA.

It belongs to the peptidase C12 family. As to quaternary structure, preferentially binds diubiquitin; the interaction does not hydrolyze diubiquitin but, in vitro, inhibits the hydrolyzing activity on other substrates. As to expression, highly expressed in heart, skeletal muscle, and testis.

It localises to the cytoplasm. It carries out the reaction Thiol-dependent hydrolysis of ester, thioester, amide, peptide and isopeptide bonds formed by the C-terminal Gly of ubiquitin (a 76-residue protein attached to proteins as an intracellular targeting signal).. Its activity is regulated as follows. Inhibited by monoubiquitin and diubiquitin. Functionally, deubiquitinating enzyme (DUB) that controls levels of cellular ubiquitin through processing of ubiquitin precursors and ubiquitinated proteins. Thiol protease that recognizes and hydrolyzes a peptide bond at the C-terminal glycine of either ubiquitin or NEDD8. Has a 10-fold preference for Arg and Lys at position P3'', and exhibits a preference towards 'Lys-48'-linked ubiquitin chains. Deubiquitinates ENAC in apical compartments, thereby regulating apical membrane recycling. Indirectly increases the phosphorylation of IGFIR, AKT and FOXO1 and promotes insulin-signaling and insulin-induced adipogenesis. Required for stress-response retinal, skeletal muscle and germ cell maintenance. May be involved in working memory. Can hydrolyze UBB(+1), a mutated form of ubiquitin which is not effectively degraded by the proteasome and is associated with neurogenerative disorders. In Homo sapiens (Human), this protein is Ubiquitin carboxyl-terminal hydrolase isozyme L3 (UCHL3).